The chain runs to 448 residues: N-succinylarginine dihydrolase (448 aa).

Residues 19–28 (GGLSYGNVAS), asparagine 110, and 137–138 (HR) contribute to the substrate site. Glutamate 174 is an active-site residue. Residue arginine 214 participates in substrate binding. Residue histidine 250 is part of the active site. Positions 252 and 365 each coordinate substrate. Catalysis depends on cysteine 371, which acts as the Nucleophile.

This sequence belongs to the succinylarginine dihydrolase family. In terms of assembly, homodimer.

The catalysed reaction is N(2)-succinyl-L-arginine + 2 H2O + 2 H(+) = N(2)-succinyl-L-ornithine + 2 NH4(+) + CO2. Its pathway is amino-acid degradation; L-arginine degradation via AST pathway; L-glutamate and succinate from L-arginine: step 2/5. Its function is as follows. Catalyzes the hydrolysis of N(2)-succinylarginine into N(2)-succinylornithine, ammonia and CO(2). The polypeptide is N-succinylarginine dihydrolase (Pseudomonas fluorescens (strain Pf0-1)).